A 450-amino-acid chain; its full sequence is Phosphoglucosamine mutase (450 aa).

Catalysis depends on serine 107, which acts as the Phosphoserine intermediate. Residues serine 107, aspartate 246, aspartate 248, and aspartate 250 each coordinate Mg(2+). Residue serine 107 is modified to Phosphoserine.

Belongs to the phosphohexose mutase family. It depends on Mg(2+) as a cofactor. Activated by phosphorylation.

It catalyses the reaction alpha-D-glucosamine 1-phosphate = D-glucosamine 6-phosphate. Its function is as follows. Catalyzes the conversion of glucosamine-6-phosphate to glucosamine-1-phosphate. The polypeptide is Phosphoglucosamine mutase (Aromatoleum aromaticum (strain DSM 19018 / LMG 30748 / EbN1) (Azoarcus sp. (strain EbN1))).